Consider the following 196-residue polypeptide: Putative NADH dehydrogenase/NAD(P)H nitroreductase SGR_2476 (196 aa).

It belongs to the nitroreductase family. HadB/RutE subfamily. FMN is required as a cofactor.

This chain is Putative NADH dehydrogenase/NAD(P)H nitroreductase SGR_2476, found in Streptomyces griseus subsp. griseus (strain JCM 4626 / CBS 651.72 / NBRC 13350 / KCC S-0626 / ISP 5235).